We begin with the raw amino-acid sequence, 353 residues long: DNA polymerase IV (353 aa).

Residues 6–187 (IIHVDCDCFY…LPVSKLHGVG (182 aa)) form the UmuC domain. Mg(2+)-binding residues include D10 and D105. The active site involves E106.

The protein belongs to the DNA polymerase type-Y family. As to quaternary structure, monomer. Requires Mg(2+) as cofactor.

It is found in the cytoplasm. The catalysed reaction is DNA(n) + a 2'-deoxyribonucleoside 5'-triphosphate = DNA(n+1) + diphosphate. In terms of biological role, poorly processive, error-prone DNA polymerase involved in untargeted mutagenesis. Copies undamaged DNA at stalled replication forks, which arise in vivo from mismatched or misaligned primer ends. These misaligned primers can be extended by PolIV. Exhibits no 3'-5' exonuclease (proofreading) activity. May be involved in translesional synthesis, in conjunction with the beta clamp from PolIII. The polypeptide is DNA polymerase IV (Pseudomonas fluorescens (strain Pf0-1)).